We begin with the raw amino-acid sequence, 217 residues long: Thymidylate kinase (217 aa).

Residue 14–21 (GNEGSGKT) participates in ATP binding.

The protein belongs to the thymidylate kinase family.

It catalyses the reaction dTMP + ATP = dTDP + ADP. Its function is as follows. Phosphorylation of dTMP to form dTDP in both de novo and salvage pathways of dTTP synthesis. The chain is Thymidylate kinase from Orientia tsutsugamushi (strain Ikeda) (Rickettsia tsutsugamushi).